A 252-amino-acid chain; its full sequence is Ribosomal RNA small subunit methyltransferase NEP1 (252 aa).

S-adenosyl-L-methionine contacts are provided by residues methionine 176, glycine 209, glycine 214, and 227–232 (ISNYPL).

This sequence belongs to the class IV-like SAM-binding methyltransferase superfamily. RNA methyltransferase NEP1 family. In terms of assembly, homodimer. Part of the small subunit (SSU) processome, composed of more than 70 proteins and the RNA chaperone small nucleolar RNA (snoRNA) U3.

The protein resides in the nucleus. Its subcellular location is the nucleolus. It catalyses the reaction a pseudouridine in rRNA + S-adenosyl-L-methionine = an N(1)-methylpseudouridine in rRNA + S-adenosyl-L-homocysteine + H(+). S-adenosyl-L-methionine-dependent pseudouridine N(1)-methyltransferase that methylates a pseudouridine in 18S rRNA. Involved the biosynthesis of the hypermodified N1-methyl-N3-(3-amino-3-carboxypropyl) pseudouridine (m1acp3-Psi) conserved in eukaryotic 18S rRNA. Also has an essential role in 40S ribosomal subunit biogenesis independent on its methyltransferase activity, facilitating the incorporation of ribosomal protein S19 during the formation of pre-ribosomes. Its function is as follows. S-adenosyl-L-methionine-dependent pseudouridine N(1)-methyltransferase that methylates pseudouridine at position in 18S rRNA. Involved the biosynthesis of the hypermodified N1-methyl-N3-(3-amino-3-carboxypropyl) pseudouridine (m1acp3-Psi) conserved in eukaryotic 18S rRNA. Is not able to methylate uridine at this position. Also has an essential role in 40S ribosomal subunit biogenesis independent on its methyltransferase activity, facilitating the incorporation of ribosomal protein S19 during the formation of pre-ribosomes. Part of the small subunit (SSU) processome, first precursor of the small eukaryotic ribosomal subunit. During the assembly of the SSU processome in the nucleolus, many ribosome biogenesis factors, an RNA chaperone and ribosomal proteins associate with the nascent pre-rRNA and work in concert to generate RNA folding, modifications, rearrangements and cleavage as well as targeted degradation of pre-ribosomal RNA by the RNA exosome. In Drosophila melanogaster (Fruit fly), this protein is Ribosomal RNA small subunit methyltransferase NEP1.